The sequence spans 295 residues: Nucleotide-binding protein SSU98_0619 (295 aa).

An ATP-binding site is contributed by 12–19; sequence GMSGAGKT. 62-65 contacts GTP; sequence DMRS.

Belongs to the RapZ-like family.

Functionally, displays ATPase and GTPase activities. This is Nucleotide-binding protein SSU98_0619 from Streptococcus suis (strain 98HAH33).